Here is a 217-residue protein sequence, read N- to C-terminus: 3,4-dihydroxy-2-butanone 4-phosphate synthase (217 aa).

Residues 37–38, D42, 150–154, and E174 each bind D-ribulose 5-phosphate; these read RE and RRGHT. A Mg(2+)-binding site is contributed by E38. Residue H153 participates in Mg(2+) binding.

This sequence belongs to the DHBP synthase family. Homodimer. Mg(2+) is required as a cofactor. Mn(2+) serves as cofactor.

The catalysed reaction is D-ribulose 5-phosphate = (2S)-2-hydroxy-3-oxobutyl phosphate + formate + H(+). Its pathway is cofactor biosynthesis; riboflavin biosynthesis; 2-hydroxy-3-oxobutyl phosphate from D-ribulose 5-phosphate: step 1/1. Functionally, catalyzes the conversion of D-ribulose 5-phosphate to formate and 3,4-dihydroxy-2-butanone 4-phosphate. The protein is 3,4-dihydroxy-2-butanone 4-phosphate synthase of Desulforapulum autotrophicum (strain ATCC 43914 / DSM 3382 / VKM B-1955 / HRM2) (Desulfobacterium autotrophicum).